The sequence spans 549 residues: Dihydroxy-acid dehydratase (549 aa).

Asp78 is a binding site for Mg(2+). Cys119 serves as a coordination point for [2Fe-2S] cluster. The Mg(2+) site is built by Asp120 and Lys121. The residue at position 121 (Lys121) is an N6-carboxylysine. Position 192 (Cys192) interacts with [2Fe-2S] cluster. Glu439 provides a ligand contact to Mg(2+). Ser465 (proton acceptor) is an active-site residue.

It belongs to the IlvD/Edd family. In terms of assembly, homodimer. [2Fe-2S] cluster serves as cofactor. Mg(2+) is required as a cofactor.

It catalyses the reaction (2R)-2,3-dihydroxy-3-methylbutanoate = 3-methyl-2-oxobutanoate + H2O. The enzyme catalyses (2R,3R)-2,3-dihydroxy-3-methylpentanoate = (S)-3-methyl-2-oxopentanoate + H2O. Its pathway is amino-acid biosynthesis; L-isoleucine biosynthesis; L-isoleucine from 2-oxobutanoate: step 3/4. It participates in amino-acid biosynthesis; L-valine biosynthesis; L-valine from pyruvate: step 3/4. Its function is as follows. Functions in the biosynthesis of branched-chain amino acids. Catalyzes the dehydration of (2R,3R)-2,3-dihydroxy-3-methylpentanoate (2,3-dihydroxy-3-methylvalerate) into 2-oxo-3-methylpentanoate (2-oxo-3-methylvalerate) and of (2R)-2,3-dihydroxy-3-methylbutanoate (2,3-dihydroxyisovalerate) into 2-oxo-3-methylbutanoate (2-oxoisovalerate), the penultimate precursor to L-isoleucine and L-valine, respectively. This is Dihydroxy-acid dehydratase from Endomicrobium trichonymphae.